We begin with the raw amino-acid sequence, 124 residues long: Ribonuclease pancreatic (124 aa).

Basic and acidic residues predominate over residues 1–13; the sequence is KESAAAKFERQHI. Positions 1 to 23 are disordered; it reads KESAAAKFERQHIDSSTSSVSSS. Substrate is bound by residues lysine 7 and arginine 10. The active-site Proton acceptor is the histidine 12. Disulfide bonds link cysteine 26–cysteine 84, cysteine 40–cysteine 95, cysteine 58–cysteine 110, and cysteine 65–cysteine 72. A glycan (N-linked (GlcNAc...) asparagine) is linked at asparagine 34. Substrate is bound by residues 41–45, lysine 66, and arginine 85; that span reads KPVNT. The active-site Proton donor is the histidine 119.

Belongs to the pancreatic ribonuclease family. As to quaternary structure, monomer. Interacts with and forms tight 1:1 complexes with RNH1. Dimerization of two such complexes may occur. Interaction with RNH1 inhibits this protein. As to expression, pancreas.

It is found in the secreted. The catalysed reaction is an [RNA] containing cytidine + H2O = an [RNA]-3'-cytidine-3'-phosphate + a 5'-hydroxy-ribonucleotide-3'-[RNA].. It carries out the reaction an [RNA] containing uridine + H2O = an [RNA]-3'-uridine-3'-phosphate + a 5'-hydroxy-ribonucleotide-3'-[RNA].. Functionally, endonuclease that catalyzes the cleavage of RNA on the 3' side of pyrimidine nucleotides. Acts on single-stranded and double-stranded RNA. This is Ribonuclease pancreatic (RNASE1) from Giraffa camelopardalis (Giraffe).